Reading from the N-terminus, the 273-residue chain is 5-deoxy-glucuronate isomerase (273 aa).

It belongs to the isomerase IolB family.

It catalyses the reaction 5-deoxy-D-glucuronate = 5-dehydro-2-deoxy-D-gluconate. Its pathway is polyol metabolism; myo-inositol degradation into acetyl-CoA; acetyl-CoA from myo-inositol: step 4/7. Involved in the isomerization of 5-deoxy-glucuronate (5DG) to 5-dehydro-2-deoxy-D-gluconate (DKG or 2-deoxy-5-keto-D-gluconate). This Listeria monocytogenes serotype 4a (strain HCC23) protein is 5-deoxy-glucuronate isomerase.